We begin with the raw amino-acid sequence, 217 residues long: Glutathione S-transferase 1 (217 aa).

Positions 1 to 83 constitute a GST N-terminal domain; it reads MVMTLYKLDA…YLVSKYGADD (83 aa). Glutathione-binding positions include Ser-11, 53 to 55, and 67 to 69; these read HTV and DSH. The 123-residue stretch at 89-211 folds into the GST C-terminal domain; that stretch reads DPKKRAIVDQ…APGNDLCKDL (123 aa).

It belongs to the GST superfamily. Theta family. As to quaternary structure, homodimer.

The enzyme catalyses RX + glutathione = an S-substituted glutathione + a halide anion + H(+). In terms of biological role, conjugation of reduced glutathione to a wide number of exogenous and endogenous hydrophobic electrophiles. In Manduca sexta (Tobacco hawkmoth), this protein is Glutathione S-transferase 1 (GST1).